A 130-amino-acid chain; its full sequence is Small ribosomal subunit protein uS8 (130 aa).

It belongs to the universal ribosomal protein uS8 family. In terms of assembly, part of the 30S ribosomal subunit. Contacts proteins S5 and S12.

One of the primary rRNA binding proteins, it binds directly to 16S rRNA central domain where it helps coordinate assembly of the platform of the 30S subunit. The polypeptide is Small ribosomal subunit protein uS8 (Aeromonas hydrophila subsp. hydrophila (strain ATCC 7966 / DSM 30187 / BCRC 13018 / CCUG 14551 / JCM 1027 / KCTC 2358 / NCIMB 9240 / NCTC 8049)).